The following is a 558-amino-acid chain: Dihydroxy-acid dehydratase (558 aa).

Residue D81 participates in Mg(2+) binding. C122 contacts [2Fe-2S] cluster. D123 and K124 together coordinate Mg(2+). At K124 the chain carries N6-carboxylysine. C195 is a binding site for [2Fe-2S] cluster. A Mg(2+)-binding site is contributed by E447. Residue S473 is the Proton acceptor of the active site.

It belongs to the IlvD/Edd family. As to quaternary structure, homodimer. [2Fe-2S] cluster serves as cofactor. Mg(2+) is required as a cofactor.

It carries out the reaction (2R)-2,3-dihydroxy-3-methylbutanoate = 3-methyl-2-oxobutanoate + H2O. The catalysed reaction is (2R,3R)-2,3-dihydroxy-3-methylpentanoate = (S)-3-methyl-2-oxopentanoate + H2O. The protein operates within amino-acid biosynthesis; L-isoleucine biosynthesis; L-isoleucine from 2-oxobutanoate: step 3/4. Its pathway is amino-acid biosynthesis; L-valine biosynthesis; L-valine from pyruvate: step 3/4. Functionally, functions in the biosynthesis of branched-chain amino acids. Catalyzes the dehydration of (2R,3R)-2,3-dihydroxy-3-methylpentanoate (2,3-dihydroxy-3-methylvalerate) into 2-oxo-3-methylpentanoate (2-oxo-3-methylvalerate) and of (2R)-2,3-dihydroxy-3-methylbutanoate (2,3-dihydroxyisovalerate) into 2-oxo-3-methylbutanoate (2-oxoisovalerate), the penultimate precursor to L-isoleucine and L-valine, respectively. The sequence is that of Dihydroxy-acid dehydratase from Bacillus subtilis (strain 168).